The chain runs to 300 residues: Phospholipase A1 (300 aa).

Cysteine 4 and cysteine 87 are disulfide-bonded. The active-site Nucleophile is the serine 137. Residue aspartate 165 is the Charge relay system of the active site. 2 cysteine pairs are disulfide-bonded: cysteine 176–cysteine 181 and cysteine 218–cysteine 227. Histidine 229 acts as the Charge relay system in catalysis. 3 cysteine pairs are disulfide-bonded: cysteine 244-cysteine 268, cysteine 245-cysteine 293, and cysteine 261-cysteine 266.

This sequence belongs to the AB hydrolase superfamily. Lipase family. As to expression, expressed by the venom gland.

Its subcellular location is the secreted. The enzyme catalyses a 1,2-diacyl-sn-glycero-3-phosphocholine + H2O = a 2-acyl-sn-glycero-3-phosphocholine + a fatty acid + H(+). Its activity is regulated as follows. Local inflammatory effects are inhibited by antiserotonin drugs (cyproheptadine and methysergide), indomethacin, betamethasone, and antihistamine (chlorpheniramine). Functionally, catalyzes the hydrolysis of phosphatidylcholine with phospholipase A1 activity. Shows potent hemolytic activity that is responsible for its lethal effect. May act as an allergen. In vivo, induces local inflammatory effects. This chain is Phospholipase A1, found in Vespa basalis (Hornet).